The chain runs to 151 residues: Small ribosomal subunit protein uS15 (151 aa).

It belongs to the universal ribosomal protein uS15 family.

The polypeptide is Small ribosomal subunit protein uS15 (RPS13) (Pisum sativum (Garden pea)).